Consider the following 23-residue polypeptide: Potassium channel toxin kappa-KTx 1.2 (23 aa).

Intrachain disulfides connect cysteine 4–cysteine 22 and cysteine 8–cysteine 18. Cysteine amide is present on cysteine 22.

This sequence belongs to the short scorpion toxin superfamily. Potassium channel inhibitor kappa-KTx family. Kappa-KTx 1 subfamily. The two disulfide isomers globular (C1-C3, C2-C4) and beads (C1-C2, C3-C4) do not show activity on Kv10.1/KCNH1/EAG1. Expressed by the venom gland.

Its subcellular location is the secreted. Its function is as follows. Shows weak blocking activity on voltage-gated potassium channels Kv10.1/KCNH1/EAG1 (IC(50)=26 uM), Kv1.2/KCNA2 (Kd=150 uM), Kv1.3/KCNA3 (Kd=40 uM), Kv1.6/KCNA3 (16.6% inhibition at 40 uM toxin). The block is dose-dependent, voltage-independent, and reversible. Also shows a weak inhibitory activity on the plant pathogen F.culmorum growth (IC(50)=18.8-37.7 uM). In Chersonesometrus fulvipes (Indian black scorpion), this protein is Potassium channel toxin kappa-KTx 1.2.